Consider the following 962-residue polypeptide: Glycine dehydrogenase (decarboxylating) (962 aa).

Position 709 is an N6-(pyridoxal phosphate)lysine (K709).

It belongs to the GcvP family. In terms of assembly, the glycine cleavage system is composed of four proteins: P, T, L and H. The cofactor is pyridoxal 5'-phosphate.

It carries out the reaction N(6)-[(R)-lipoyl]-L-lysyl-[glycine-cleavage complex H protein] + glycine + H(+) = N(6)-[(R)-S(8)-aminomethyldihydrolipoyl]-L-lysyl-[glycine-cleavage complex H protein] + CO2. The glycine cleavage system catalyzes the degradation of glycine. The P protein binds the alpha-amino group of glycine through its pyridoxal phosphate cofactor; CO(2) is released and the remaining methylamine moiety is then transferred to the lipoamide cofactor of the H protein. This chain is Glycine dehydrogenase (decarboxylating), found in Shewanella amazonensis (strain ATCC BAA-1098 / SB2B).